Consider the following 136-residue polypeptide: Small ribosomal subunit protein uS12 (136 aa).

Residues 1-28 (MPTIQQLIRSERQELKKKTKSPALKSCP) are disordered. The residue at position 89 (Asp89) is a 3-methylthioaspartic acid. The segment at 101 to 136 (TLDTAGVKDRKQGRSKYGAKRPKPGAASTASTGKKR) is disordered. Residues 113–123 (GRSKYGAKRPK) show a composition bias toward basic residues.

The protein belongs to the universal ribosomal protein uS12 family. Part of the 30S ribosomal subunit. Contacts proteins S8 and S17. May interact with IF1 in the 30S initiation complex.

With S4 and S5 plays an important role in translational accuracy. Functionally, interacts with and stabilizes bases of the 16S rRNA that are involved in tRNA selection in the A site and with the mRNA backbone. Located at the interface of the 30S and 50S subunits, it traverses the body of the 30S subunit contacting proteins on the other side and probably holding the rRNA structure together. The combined cluster of proteins S8, S12 and S17 appears to hold together the shoulder and platform of the 30S subunit. This Cyanothece sp. (strain PCC 7425 / ATCC 29141) protein is Small ribosomal subunit protein uS12.